A 337-amino-acid polypeptide reads, in one-letter code: 1-aminocyclopropane-1-carboxylate deaminase (337 aa).

At Lys-50 the chain carries N6-(pyridoxal phosphate)lysine. The active-site Nucleophile is Ser-77.

The protein belongs to the ACC deaminase/D-cysteine desulfhydrase family. As to quaternary structure, homotrimer. Pyridoxal 5'-phosphate serves as cofactor.

The enzyme catalyses 1-aminocyclopropane-1-carboxylate + H2O = 2-oxobutanoate + NH4(+). In terms of biological role, catalyzes a cyclopropane ring-opening reaction, the irreversible conversion of 1-aminocyclopropane-1-carboxylate (ACC) to ammonia and alpha-ketobutyrate. Allows growth on ACC as a nitrogen source. The protein is 1-aminocyclopropane-1-carboxylate deaminase of Bradyrhizobium diazoefficiens (strain JCM 10833 / BCRC 13528 / IAM 13628 / NBRC 14792 / USDA 110).